A 96-amino-acid chain; its full sequence is Large ribosomal subunit protein uL4 (96 aa).

Residues 77–96 (RAPNKKVKRRELKKNPLKNL) are disordered. Basic residues predominate over residues 79–96 (PNKKVKRRELKKNPLKNL).

Belongs to the universal ribosomal protein uL4 family. Component of the large ribosomal subunit.

The protein resides in the cytoplasm. Functionally, component of the large ribosomal subunit. The ribosome is a large ribonucleoprotein complex responsible for the synthesis of proteins in the cell. The polypeptide is Large ribosomal subunit protein uL4 (rpl4) (Xenopus tropicalis (Western clawed frog)).